A 159-amino-acid chain; its full sequence is Probable epoxidase scpX (159 aa).

The first 25 residues, 1 to 25 (MATLIRLLRLLPVASSSAVLMFALD), serve as a signal peptide directing secretion. Transmembrane regions (helical) follow at residues 59–79 (WVLI…LFIS) and 96–116 (LLFS…IAAI). 2 N-linked (GlcNAc...) asparagine glycosylation sites follow: N124 and N136. The helical transmembrane segment at 139-159 (RALLTDLPAWLCFIAAALKAL) threads the bilayer.

Belongs to the epoxidase xenD family.

Its subcellular location is the membrane. The protein operates within mycotoxin biosynthesis. Probable epoxidase; part of the gene scp cluster that mediates the biosynthesis of a hirsutellone-like compound that has still to be identified. The protein is Probable epoxidase scpX of Mollisia scopiformis (Conifer needle endophyte fungus).